A 220-amino-acid chain; its full sequence is Ribose-5-phosphate isomerase A (220 aa).

Residues 28-31 (TGST), 81-84 (DGAD), and 94-97 (KGGG) each bind substrate. Glutamate 103 functions as the Proton acceptor in the catalytic mechanism. A substrate-binding site is contributed by lysine 121.

The protein belongs to the ribose 5-phosphate isomerase family. Homodimer.

The catalysed reaction is aldehydo-D-ribose 5-phosphate = D-ribulose 5-phosphate. It functions in the pathway carbohydrate degradation; pentose phosphate pathway; D-ribose 5-phosphate from D-ribulose 5-phosphate (non-oxidative stage): step 1/1. In terms of biological role, catalyzes the reversible conversion of ribose-5-phosphate to ribulose 5-phosphate. The sequence is that of Ribose-5-phosphate isomerase A from Shewanella baltica (strain OS185).